A 221-amino-acid chain; its full sequence is NIP3 homolog (221 aa).

The segment at 24-55 (GEKTDESVQPQQQTEQSSAQQTTPSAKAVSNP) is disordered. A Glycyl lysine isopeptide (Lys-Gly) (interchain with G-Cter in ubiquitin) cross-link involves residue K26. A compositionally biased stretch (low complexity) spans 32-49 (QPQQQTEQSSAQQTTPSA). A helical transmembrane segment spans residues 189–209 (VVFGFLVTNIFSFVVGAAVGF). The segment at 189-209 (VVFGFLVTNIFSFVVGAAVGF) is required for initiation of apoptosis.

Belongs to the NIP3 family. As to quaternary structure, homodimer; via transmembrane domain. Interacts with ced-3 and ced-9. In terms of processing, ubiquitinated and degraded by the proteasome. Under oxidative stress conditions, ubiquitinated at Lys-26 in a pink-1 dependent manner. Colocalizes with pdr-1 and may be ubiquitinated by it. As to expression, expressed in all somatic tissues including neurons, pharynx, intestine, body wall muscles and vulva muscles.

It is found in the mitochondrion outer membrane. Functionally, initiates apoptosis in a BH3-independent mechanism possibly by recruiting ced-3 to mitochondria and other cytoplasmic membranes. Has a role in lifespan and tumor growth. Required for the induction of mitophagy under stress conditions. The chain is NIP3 homolog from Caenorhabditis elegans.